Consider the following 290-residue polypeptide: Hydroxyacylglutathione hydrolase-like protein (290 aa).

Positions 54, 56, 58, 59, 110, 134, and 172 each coordinate Zn(2+).

It belongs to the metallo-beta-lactamase superfamily. Glyoxalase II family. The cofactor is Zn(2+).

In terms of biological role, hydrolase acting on ester bonds. The sequence is that of Hydroxyacylglutathione hydrolase-like protein (HAGHL) from Homo sapiens (Human).